The primary structure comprises 755 residues: Catalase-peroxidase (755 aa).

The tryptophyl-tyrosyl-methioninium (Trp-Tyr) (with M-267) cross-link spans 93 to 241; sequence WHSAGTYRVF…LAAAHMGLIY (149 aa). H94 acts as the Proton acceptor in catalysis. Residues 241-267 constitute a cross-link (tryptophyl-tyrosyl-methioninium (Tyr-Met) (with W-93)); that stretch reads YVNPEGPDGNPDPVAAARDIRVTFGRM. Heme b is bound at residue H282.

The protein belongs to the peroxidase family. Peroxidase/catalase subfamily. Homodimer or homotetramer. Heme b is required as a cofactor. Formation of the three residue Trp-Tyr-Met cross-link is important for the catalase, but not the peroxidase activity of the enzyme.

Its subcellular location is the cytoplasm. The catalysed reaction is H2O2 + AH2 = A + 2 H2O. The enzyme catalyses 2 H2O2 = O2 + 2 H2O. In terms of biological role, bifunctional enzyme with both catalase and broad-spectrum peroxidase activity. The polypeptide is Catalase-peroxidase (Podospora anserina (strain S / ATCC MYA-4624 / DSM 980 / FGSC 10383) (Pleurage anserina)).